A 485-amino-acid chain; its full sequence is Choline/ethanolamine transporter flvcr2b (485 aa).

Residues 1 to 46 (MDTRFNDINRVKMGDESKSVDGEVNDNTYYSKTDAEVNFEHRYTTP) lie on the Cytoplasmic side of the membrane. The chain crosses the membrane as a helical span at residues 47–71 (ETRLYKKRWVIVCLFSSYSLCNSYQ). Residues N68 and W72 each coordinate choline. Over 72–89 (WIQYGIINNIFMRFYGVD) the chain is Extracellular. Residues 90-117 (SFTIDWMSMIYMLTYIPLIFPVSWLLDK) form a helical membrane-spanning segment. The Cytoplasmic segment spans residues 118–119 (KG). Residues 120-139 (LRVIALVAAALNCAGTWIKV) form a helical membrane-spanning segment. Over 140-146 (ASARPDL) the chain is Extracellular. Residues 147–175 (FPVTFLGQFTCSVAQVFILGMPSRIASVW) traverse the membrane as a helical segment. Positions 161 and 165 each coordinate choline. Residues 176-180 (FGSDE) lie on the Cytoplasmic side of the membrane. A helical membrane pass occupies residues 181 to 206 (VSTACSIGVFGNQLGIAIGFLVPPIL). The Extracellular segment spans residues 207–211 (VPNVD). A helical transmembrane segment spans residues 212–241 (DLDELAAHIRVMFYITAGVATFLFVLVVIV). The Cytoplasmic segment spans residues 242 to 277 (FQERPEIPPTLAQAAARRISPESYSYTASILRLLRN). A helical transmembrane segment spans residues 278 to 308 (KAFILLVITYGLNVGCFYAVSTLLNRMIIEH). Y295 provides a ligand contact to choline. The Extracellular portion of the chain corresponds to 309–312 (YPGE). Residues 313–341 (EVNAGRIGLTIVVAGMVGSLICGIWLDRS) form a helical membrane-spanning segment. The Cytoplasmic segment spans residues 342-343 (KT). The helical transmembrane segment at 344 to 366 (YKQTTLAVYLMSLMGLVIYAFTL) threads the bilayer. At 367-369 (DLH) the chain is on the extracellular side. The chain crosses the membrane as a helical span at residues 370–399 (HLWVVFITAGALGFFMTGYLPLGFEFAVEL). Topologically, residues 400 to 407 (TYPESEGT) are cytoplasmic. The chain crosses the membrane as a helical span at residues 408–433 (SSGLLNCSAQVFGIIFTICQGKIMDS). Q417 is a binding site for choline. Topologically, residues 434 to 435 (FG) are extracellular. A helical transmembrane segment spans residues 436–458 (TLAGNLFLCAFLLIGTIITGCIK). The Cytoplasmic segment spans residues 459 to 485 (SDLRRQLANQQAQTADHLDTSPTQTRF).

It belongs to the major facilitator superfamily. Feline leukemia virus subgroup C receptor (TC 2.A.1.28.1) family.

It localises to the cell membrane. The protein localises to the mitochondrion membrane. The protein resides in the endoplasmic reticulum membrane. The catalysed reaction is choline(out) = choline(in). It catalyses the reaction ethanolamine(in) = ethanolamine(out). The enzyme catalyses heme b(in) = heme b(out). Choline uniporter that specifically mediates choline uptake at the blood-brain-barrier. Responsible for the majority of choline uptake across the blood-brain-barrier from the circulation into the brain. Choline, a nutrient critical for brain development, is a precursor of phosphatidylcholine, as well as betaine. Also mediates transport of ethanolamine. Choline and ethanolamine transport is not coupled with proton transport and is exclusively driven by the choline gradient across the plasma membrane. Also acts as a heme b transporter. This is Choline/ethanolamine transporter flvcr2b from Danio rerio (Zebrafish).